The primary structure comprises 402 residues: Propionate kinase (402 aa).

ATP contacts are provided by N11 and K18. N11 is a Mg(2+) binding site. R86 is a substrate binding site. Catalysis depends on D143, which acts as the Proton donor/acceptor. ATP-binding positions include H175, 203 to 207 (HLGNG), 278 to 280 (DLR), and 326 to 330 (GIGEN).

It belongs to the acetokinase family. TdcD subfamily. Homodimer. The cofactor is Mg(2+).

It catalyses the reaction propanoate + ATP = propanoyl phosphate + ADP. The protein operates within amino-acid degradation; L-threonine degradation via propanoate pathway; propanoate from L-threonine: step 4/4. In terms of biological role, catalyzes the conversion of propionyl phosphate and ADP to propionate and ATP. The chain is Propionate kinase from Escherichia coli O6:H1 (strain CFT073 / ATCC 700928 / UPEC).